The following is a 737-amino-acid chain: Photosystem I P700 chlorophyll a apoprotein A2 (737 aa).

Helical transmembrane passes span 46 to 69, 135 to 158, 175 to 199, 273 to 291, 330 to 353, 369 to 395, 417 to 439, and 520 to 538; these read IFAS…FHVA, LYNG…LHLQ, LNHH…HVAI, IAHH…GHMY, LHFQ…QHMY, AALY…IFLV, AIIS…LYVH, and FLVH…LILV. [4Fe-4S] cluster contacts are provided by cysteine 562 and cysteine 571. Helical transmembrane passes span 578–599 and 646–668; these read AFYL…YWHW and LSVW…MFLI. Positions 657, 665, and 673 each coordinate chlorophyll a. Phylloquinone is bound at residue tryptophan 674. The chain crosses the membrane as a helical span at residues 710-730; the sequence is LVGLAHFAVGYIVTYAAFLIA.

This sequence belongs to the PsaA/PsaB family. As to quaternary structure, the PsaA/B heterodimer binds the P700 chlorophyll special pair and subsequent electron acceptors. PSI consists of a core antenna complex that captures photons, and an electron transfer chain that converts photonic excitation into a charge separation. The eukaryotic PSI reaction center is composed of at least 11 subunits. P700 is a chlorophyll a/chlorophyll a' dimer, A0 is one or more chlorophyll a, A1 is one or both phylloquinones and FX is a shared 4Fe-4S iron-sulfur center. is required as a cofactor.

It localises to the plastid. Its subcellular location is the cyanelle thylakoid membrane. The catalysed reaction is reduced [plastocyanin] + hnu + oxidized [2Fe-2S]-[ferredoxin] = oxidized [plastocyanin] + reduced [2Fe-2S]-[ferredoxin]. PsaA and PsaB bind P700, the primary electron donor of photosystem I (PSI), as well as the electron acceptors A0, A1 and FX. PSI is a cytochrome c6-ferredoxin oxidoreductase, converting photonic excitation into a charge separation, which transfers an electron from the donor P700 chlorophyll pair to the spectroscopically characterized acceptors A0, A1, FX, FA and FB in turn. Oxidized P700 is reduced on the lumenal side of the thylakoid membrane by cytochrome c6. In Cyanophora paradoxa, this protein is Photosystem I P700 chlorophyll a apoprotein A2.